The sequence spans 160 residues: Transcriptional regulator MraZ (160 aa).

SpoVT-AbrB domains follow at residues 5–50 (NFET…DGGY) and 93–136 (AVEC…SQAE).

It belongs to the MraZ family. Forms oligomers.

It localises to the cytoplasm. The protein localises to the nucleoid. The chain is Transcriptional regulator MraZ from Geotalea daltonii (strain DSM 22248 / JCM 15807 / FRC-32) (Geobacter daltonii).